A 228-amino-acid polypeptide reads, in one-letter code: MKTLIHNDWQTVLEPVFESPEYAQLHAFLKEEYATKTIYPEMHHIFQAFEWTPFHDVKVVILGQDPYHNPRQAVGASFAVAPGVALPPSLQNIYKELQSDLGYPPVHHGYLKAWADQGVLLLNAVLTVQAGEAYSHQNHGWEELTDAAIAALSARGGVVFILWGNAAKKKAAVIDTSKNAIIASAHPSPLSASRGFFGSRPFSRTNAALEKMGEAPINWQLPETVKAD.

The active-site Proton acceptor is the Asp-65.

Belongs to the uracil-DNA glycosylase (UDG) superfamily. UNG family.

The protein localises to the cytoplasm. It catalyses the reaction Hydrolyzes single-stranded DNA or mismatched double-stranded DNA and polynucleotides, releasing free uracil.. In terms of biological role, excises uracil residues from the DNA which can arise as a result of misincorporation of dUMP residues by DNA polymerase or due to deamination of cytosine. The chain is Uracil-DNA glycosylase from Lacticaseibacillus paracasei (strain ATCC 334 / BCRC 17002 / CCUG 31169 / CIP 107868 / KCTC 3260 / NRRL B-441) (Lactobacillus paracasei).